A 1058-amino-acid chain; its full sequence is Carbamoyl phosphate synthase large chain (1058 aa).

The carboxyphosphate synthetic domain stretch occupies residues 1–401; it reads MPKRKDIQKI…SLLKACRSLE (401 aa). Positions 129, 169, 175, 176, 208, 210, 215, 241, 242, 243, 284, and 298 each coordinate ATP. The ATP-grasp 1 domain occupies 133 to 327; that stretch reads KQLMQELDQP…IAKLAAKIAV (195 aa). Positions 284, 298, and 300 each coordinate Mg(2+). Residues Gln-284, Glu-298, and Asn-300 each contribute to the Mn(2+) site. An oligomerization domain region spans residues 402 to 546; it reads IGVCHNEMTS…YSTYELENES (145 aa). Residues 547 to 929 form a carbamoyl phosphate synthetic domain region; the sequence is VQSNKESILV…ALYKAFEANN (383 aa). An ATP-grasp 2 domain is found at 671 to 861; the sequence is EKALKELGIP…MAQIATKLIL (191 aa). Arg-707, Ser-746, Ile-748, Glu-752, Gly-777, Val-778, His-779, Ser-780, Gln-820, and Glu-832 together coordinate ATP. The Mg(2+) site is built by Gln-820, Glu-832, and Asn-834. Mn(2+)-binding residues include Gln-820, Glu-832, and Asn-834. Positions 930-1058 constitute an MGS-like domain; the sequence is SHLSEFGQIV…ESRCFNIEAI (129 aa). The segment at 930–1058 is allosteric domain; sequence SHLSEFGQIV…ESRCFNIEAI (129 aa).

Belongs to the CarB family. As to quaternary structure, composed of two chains; the small (or glutamine) chain promotes the hydrolysis of glutamine to ammonia, which is used by the large (or ammonia) chain to synthesize carbamoyl phosphate. Tetramer of heterodimers (alpha,beta)4. Mg(2+) is required as a cofactor. Requires Mn(2+) as cofactor.

The catalysed reaction is hydrogencarbonate + L-glutamine + 2 ATP + H2O = carbamoyl phosphate + L-glutamate + 2 ADP + phosphate + 2 H(+). It carries out the reaction hydrogencarbonate + NH4(+) + 2 ATP = carbamoyl phosphate + 2 ADP + phosphate + 2 H(+). It functions in the pathway amino-acid biosynthesis; L-arginine biosynthesis; carbamoyl phosphate from bicarbonate: step 1/1. Its pathway is pyrimidine metabolism; UMP biosynthesis via de novo pathway; (S)-dihydroorotate from bicarbonate: step 1/3. Its function is as follows. Large subunit of the glutamine-dependent carbamoyl phosphate synthetase (CPSase). CPSase catalyzes the formation of carbamoyl phosphate from the ammonia moiety of glutamine, carbonate, and phosphate donated by ATP, constituting the first step of 2 biosynthetic pathways, one leading to arginine and/or urea and the other to pyrimidine nucleotides. The large subunit (synthetase) binds the substrates ammonia (free or transferred from glutamine from the small subunit), hydrogencarbonate and ATP and carries out an ATP-coupled ligase reaction, activating hydrogencarbonate by forming carboxy phosphate which reacts with ammonia to form carbamoyl phosphate. This is Carbamoyl phosphate synthase large chain from Streptococcus pyogenes serotype M18 (strain MGAS8232).